Consider the following 360-residue polypeptide: Peptide chain release factor 1 (360 aa).

An N5-methylglutamine modification is found at Gln-235. Residues 286–311 (QAQAQADTRRNLLGSGDRSDKIRTYN) form a disordered region.

It belongs to the prokaryotic/mitochondrial release factor family. In terms of processing, methylated by PrmC. Methylation increases the termination efficiency of RF1.

It is found in the cytoplasm. Functionally, peptide chain release factor 1 directs the termination of translation in response to the peptide chain termination codons UAG and UAA. The polypeptide is Peptide chain release factor 1 (Histophilus somni (strain 2336) (Haemophilus somnus)).